The sequence spans 68 residues: Protein SlyX homolog (68 aa).

This sequence belongs to the SlyX family.

This chain is Protein SlyX homolog, found in Brucella suis (strain ATCC 23445 / NCTC 10510).